A 96-amino-acid chain; its full sequence is Small ribosomal subunit protein bS6c (96 aa).

Belongs to the bacterial ribosomal protein bS6 family.

The protein resides in the plastid. It is found in the chloroplast. In terms of biological role, binds together with bS18 to 16S ribosomal RNA. In Guillardia theta (Cryptophyte), this protein is Small ribosomal subunit protein bS6c (rps6).